The chain runs to 417 residues: Methylthioribose-1-phosphate isomerase (417 aa).

Residue aspartate 285 is the Proton donor of the active site.

The protein belongs to the eIF-2B alpha/beta/delta subunits family. MtnA subfamily.

It localises to the cytoplasm. The protein resides in the nucleus. The catalysed reaction is 5-(methylsulfanyl)-alpha-D-ribose 1-phosphate = 5-(methylsulfanyl)-D-ribulose 1-phosphate. It functions in the pathway amino-acid biosynthesis; L-methionine biosynthesis via salvage pathway; L-methionine from S-methyl-5-thio-alpha-D-ribose 1-phosphate: step 1/6. Catalyzes the interconversion of methylthioribose-1-phosphate (MTR-1-P) into methylthioribulose-1-phosphate (MTRu-1-P). The sequence is that of Methylthioribose-1-phosphate isomerase from Lachancea thermotolerans (strain ATCC 56472 / CBS 6340 / NRRL Y-8284) (Yeast).